Here is a 132-residue protein sequence, read N- to C-terminus: ATP synthase epsilon chain (132 aa).

The protein belongs to the ATPase epsilon chain family. As to quaternary structure, F-type ATPases have 2 components, CF(1) - the catalytic core - and CF(0) - the membrane proton channel. CF(1) has five subunits: alpha(3), beta(3), gamma(1), delta(1), epsilon(1). CF(0) has three main subunits: a, b and c.

The protein resides in the cell inner membrane. Functionally, produces ATP from ADP in the presence of a proton gradient across the membrane. The chain is ATP synthase epsilon chain (atpC) from Aquifex aeolicus (strain VF5).